The chain runs to 330 residues: Ketol-acid reductoisomerase (NADP(+)) (330 aa).

The region spanning 2-182 (VKVYYDADAN…GCTKAGVFET (181 aa)) is the KARI N-terminal Rossmann domain. NADP(+)-binding positions include 25-28 (YGSQ), Arg-48, Ser-51, and 83-86 (DEIQ). The active site involves His-108. Gly-134 is an NADP(+) binding site. The KARI C-terminal knotted domain occupies 183 to 328 (SFREETETDL…ARLREMMPWL (146 aa)). Residues Asp-191, Glu-195, Glu-227, and Glu-231 each coordinate Mg(2+). Residue Ser-252 participates in substrate binding.

Belongs to the ketol-acid reductoisomerase family. It depends on Mg(2+) as a cofactor.

The catalysed reaction is (2R)-2,3-dihydroxy-3-methylbutanoate + NADP(+) = (2S)-2-acetolactate + NADPH + H(+). It catalyses the reaction (2R,3R)-2,3-dihydroxy-3-methylpentanoate + NADP(+) = (S)-2-ethyl-2-hydroxy-3-oxobutanoate + NADPH + H(+). It functions in the pathway amino-acid biosynthesis; L-isoleucine biosynthesis; L-isoleucine from 2-oxobutanoate: step 2/4. The protein operates within amino-acid biosynthesis; L-valine biosynthesis; L-valine from pyruvate: step 2/4. Involved in the biosynthesis of branched-chain amino acids (BCAA). Catalyzes an alkyl-migration followed by a ketol-acid reduction of (S)-2-acetolactate (S2AL) to yield (R)-2,3-dihydroxy-isovalerate. In the isomerase reaction, S2AL is rearranged via a Mg-dependent methyl migration to produce 3-hydroxy-3-methyl-2-ketobutyrate (HMKB). In the reductase reaction, this 2-ketoacid undergoes a metal-dependent reduction by NADPH to yield (R)-2,3-dihydroxy-isovalerate. The chain is Ketol-acid reductoisomerase (NADP(+)) from Desulforamulus reducens (strain ATCC BAA-1160 / DSM 100696 / MI-1) (Desulfotomaculum reducens).